Reading from the N-terminus, the 721-residue chain is Ribonucleoside-diphosphate reductase subunit alpha (721 aa).

Substrate contacts are provided by residues T159, 175–176 (SC), G204, 384–388 (NLCSE), and 589–593 (PTGSI). A disulfide bridge connects residues C176 and C413. N384 acts as the Proton acceptor in catalysis. C386 (cysteine radical intermediate) is an active-site residue. E388 acts as the Proton acceptor in catalysis.

It belongs to the ribonucleoside diphosphate reductase large chain family. Tetramer of two alpha and two beta subunits.

The catalysed reaction is a 2'-deoxyribonucleoside 5'-diphosphate + [thioredoxin]-disulfide + H2O = a ribonucleoside 5'-diphosphate + [thioredoxin]-dithiol. With respect to regulation, under complex allosteric control mediated by deoxynucleoside triphosphates and ATP binding. The type of nucleotide bound at the specificity site determines substrate preference. It seems probable that ATP makes the enzyme reduce CDP and UDP, dGTP favors ADP reduction and dTTP favors GDP reduction. Provides the precursors necessary for DNA synthesis. Catalyzes the biosynthesis of deoxyribonucleotides from the corresponding ribonucleotides. The sequence is that of Ribonucleoside-diphosphate reductase subunit alpha (nrdE) from Mycoplasma pneumoniae (strain ATCC 29342 / M129 / Subtype 1) (Mycoplasmoides pneumoniae).